The primary structure comprises 129 residues: M-zodatoxin-Lt8a (129 aa).

The signal sequence occupies residues 1–20 (MKYFVVALALVAAFACIAES). A propeptide spanning residues 21 to 60 (KPAESEHELAEVEEENELADLEDAVWLEHLADLSDLEEAR) is cleaved from the precursor. Residues 57–60 (EEAR) carry the Processing quadruplet motif motif.

The protein belongs to the cationic peptide 06 (cytoinsectotoxin) family. Post-translationally, cleavage of the propeptide depends on the processing quadruplet motif (XXXR, with at least one of X being E). Expressed by the venom gland.

The protein localises to the secreted. In terms of biological role, insecticidal, cytolytic and antimicrobial peptide. Has insecticidal activity against the flesh fly S.carnaria, and against the cockroach N.cinerea. Has insecticidal activity against D.melanogaster. Has hemolytic activity against human erythrocytes (EC(50)=6 uM). Has cytolytic activity against insect Sf9 cells (EC(50)=1 uM) and human leukocytes (EC(50)=3 uM). Has antibacterial activity against the Gram-positive bacteria A.globiformis VKM Ac-1112 (MIC=0.5 uM), and B.subtilis VKM B-501 (MIC=0.6-0.9 uM), and against the Gram-negative bacteria E.coli C600 (MIC=0.5 uM), E.coli DH5alpha (MIC=0.9 uM), E.coli MH1 (MIC=0.5 uM), P.aeruginosa PAO1 (MIC=1.9 uM), and P.fluorescens VKM B-894 (MIC=3.8 uM). Lacks antimicrobial activity against the Gram-positive bacteria M.luteus and S.aureus, and against the Gram-negative bacterium S.marcescens. Forms voltage-dependent, ion-permeable channels in membranes. At high concentration causes cell membrane lysis. The sequence is that of M-zodatoxin-Lt8a (cit 1-1) from Lachesana tarabaevi (Spider).